Reading from the N-terminus, the 567-residue chain is DNA-binding protein REPIN1 (567 aa).

The segment at 17 to 52 is disordered; sequence PRLLSGPSQESPQTLGKESRGLRQQGTSVAQSGAQA. Residues 22–50 show a composition bias toward polar residues; that stretch reads GPSQESPQTLGKESRGLRQQGTSVAQSGA. Ser-27 bears the Phosphoserine mark. Thr-30 bears the Phosphothreonine mark. Lys-33 is subject to N6-acetyllysine. The C2H2-type 1; atypical zinc finger occupies 57–79; that stretch reads HRCAHCRRHFPGWVALWLHTRRC. 7 C2H2-type zinc fingers span residues 85–107, 116–138, 145–168, 177–199, 236–258, 264–286, and 292–314; these read LPCP…RQVH, FACH…LRAH, IACP…RRCH, FICG…KRVH, FQCA…RRVH, HQCP…RRIH, and YPCK…SKIH. The residue at position 276 (Lys-276) is an N6-acetyllysine. Residues 305–315 are compositionally biased toward basic residues; the sequence is PNLLSHSKIHK. The interval 305–372 is disordered; it reads PNLLSHSKIH…HPQDPIEAPP (68 aa). The segment covering 345-362 has biased composition (pro residues); the sequence is PAVPLKPAQEPPPGAPPE. 7 C2H2-type zinc fingers span residues 375–397, 403–425, 431–453, 459–481, 487–509, 515–537, and 543–565; these read YSCD…QRQH, FTCA…SRVH, FACE…RRDH, FVCP…RRIH, YVCP…RRIH, YACP…RKSH, and FCCA…QKKH.

Homodimers and homomultimers. Found in a complex with RIP60 and RIP100. As to expression, expressed in adipose tissue and bone tissue.

The protein localises to the nucleus. The protein resides in the cytoplasm. It is found in the cytosol. In terms of biological role, sequence-specific double-stranded DNA-binding protein. Binds ATT-rich and T-rich DNA sequences and facilitates DNA bending. May regulate the expression of genes involved in cellular fatty acid import, including SCARB1/CD36, and genes involved in lipid droplet formation. May regulate the expression of LCN2, and thereby influence iron metabolism and apoptosis-related pathways. May regulate the expression of genes involved in glucose transport. This chain is DNA-binding protein REPIN1 (REPIN1), found in Homo sapiens (Human).